Reading from the N-terminus, the 148-residue chain is ASCH domain-containing ribonuclease (148 aa).

An ASCH domain is found at 13 to 70; it reads SLWPEFAKAIVSGKKTVEFRRRIPLPALSARIWIYATRPVKSVIGFAYLEAIVQGDVN.

It depends on Mn(2+) as a cofactor. Ni(2+) serves as cofactor.

Its function is as follows. Shows sequence-specific endoribonuclease activity towards single-stranded RNA (ssRNA), with a preference for the bond between pyrimidine and adenine nucleotides. May also have 5'-exonuclease activity. This chain is ASCH domain-containing ribonuclease, found in Zymomonas mobilis subsp. mobilis (strain ATCC 10988 / DSM 424 / LMG 404 / NCIMB 8938 / NRRL B-806 / ZM1).